The chain runs to 214 residues: Dephospho-CoA kinase (214 aa).

A DPCK domain is found at 3–202 (KIGLTGGIGS…DRWLALAGAA (200 aa)). Residue 11–16 (GSGKSR) participates in ATP binding.

The protein belongs to the CoaE family.

The protein resides in the cytoplasm. It catalyses the reaction 3'-dephospho-CoA + ATP = ADP + CoA + H(+). It participates in cofactor biosynthesis; coenzyme A biosynthesis; CoA from (R)-pantothenate: step 5/5. Catalyzes the phosphorylation of the 3'-hydroxyl group of dephosphocoenzyme A to form coenzyme A. The chain is Dephospho-CoA kinase from Bordetella pertussis (strain Tohama I / ATCC BAA-589 / NCTC 13251).